We begin with the raw amino-acid sequence, 200 residues long: ASI1-immunoprecipitated protein 1 (200 aa).

The 84-residue stretch at 18–101 folds into the RRM domain; sequence RTVYVDELTP…RPVRACAAEP (84 aa).

Component of the ASI1-AIPP1-EDM2 (AAE) RNA regulatory complex composed of at least AIPP1/EDM3, ASI1 and EDM2 and may contain CPL2, AIPP2 and AIPP3/BDT1. Binds directly to ASI1 and EDM2 and may function as a bridge protein between them. Co-associates with EDM2 to histone H3 lysine 9 dimethylation (H3K9me2)-marked chromatin and transcripts at a critical proximal polyadenylation site of RPP7 to hamper proximal transcript polyadeylation/termination.

It is found in the nucleus. In terms of biological role, prevents gene silencing by suppressing CHG methylation as well as histone H3 lysine 9 dimethylation (H3K9me2) status at target loci. Collaboratively with ASI1 and EDM2, the AAE complex regulates alternative RNA processing (e.g. alternative splicing) and epigenetic silencing (e.g. H3K9me2) of intronic heterochromatin-containing genes as well as genic heterochromatin-containing genes by promoting distal 3' polyadenylation, thus being required for the accumulation of their full-length transcripts. May also modulate transposable elements (TE) expression. Mediates RPP7-dependent race-specific disease resistance by promoting histone H3 lysine 9 dimethylation (H3K9me2) at the proximal RPP7 polyadenylation site, thus controlling alternative polyadenylation of RPP7 immune receptor transcripts and facilitating 2-phosphoserine RNAPII occupancy. In cv. Columbia, required for RPP7-dependent disease resistance against the Hyaloperonospora arabidopsidis isolate Hiks1. The sequence is that of ASI1-immunoprecipitated protein 1 from Arabidopsis thaliana (Mouse-ear cress).